A 471-amino-acid chain; its full sequence is Putative multidrug resistance protein MdtD (471 aa).

The Periplasmic portion of the chain corresponds to 1-11 (MTDLPDSTRWR). The helical transmembrane segment at 12 to 32 (LWIVAFGFFMQSLDTTIVNTA) threads the bilayer. Residues 33-48 (LPSMAQSLGESPLHMH) lie on the Cytoplasmic side of the membrane. A helical transmembrane segment spans residues 49–69 (MVIVSYVLTVAVMLPASGWLA). The Periplasmic portion of the chain corresponds to 70–76 (DKVGVRN). A helical transmembrane segment spans residues 77–97 (IFFTAIVLFTLGSLFCALSGT). The Cytoplasmic portion of the chain corresponds to 98 to 101 (LNEL). Residues 102 to 124 (LLARALQGVGGAMMVPVGRLTVM) traverse the membrane as a helical segment. The Periplasmic portion of the chain corresponds to 125-137 (KIVPREQYMAAMT). A helical membrane pass occupies residues 138-158 (FVTLPGQVGPLLGPALGGLLV). The Cytoplasmic portion of the chain corresponds to 159–164 (EYASWH). The chain crosses the membrane as a helical span at residues 165–185 (WIFLINIPVGIIGAIATLMLM). The Periplasmic segment spans residues 186–196 (PNYTMQTRRFD). Residues 197–217 (LSGFLLLAVGMAVLTLALDGS) traverse the membrane as a helical segment. Topologically, residues 218-224 (KGTGLSP) are cytoplasmic. A helical transmembrane segment spans residues 225 to 245 (LAIAGLVAVGVVALVLYLLHA). Over 246 to 262 (QNNNRALFSLKLFRTRT) the chain is Periplasmic. A helical transmembrane segment spans residues 263-283 (FSLGLAGSFAGRIGSGMLPFM). At 284–285 (TP) the chain is on the cytoplasmic side. Residues 286 to 306 (VFLQIGLGFSPFHAGLMMIPM) traverse the membrane as a helical segment. Residues 307-341 (VLGSMGMKRIVVQVVNRFGYRRVLVATTLGLSLVT) lie on the Periplasmic side of the membrane. Residues 342–362 (LLFMTTALLGWYYVLPFVLFL) traverse the membrane as a helical segment. Topologically, residues 363-395 (QGMVNSTRFSSMNTLTLKDLPDNLASSGNSLLS) are cytoplasmic. A helical transmembrane segment spans residues 396–416 (MIMQLSMSIGVTIAGLLLGLF). Topologically, residues 417 to 430 (GSQHVSVDSGTTQT) are periplasmic. The helical transmembrane segment at 431–451 (VFMYTWLSMASIIALPAFIFA) threads the bilayer. Residues 452–471 (RVPNDTHQNVAISRRKRSAQ) are Cytoplasmic-facing.

The protein belongs to the major facilitator superfamily. TCR/Tet family.

It is found in the cell inner membrane. In Escherichia coli O6:K15:H31 (strain 536 / UPEC), this protein is Putative multidrug resistance protein MdtD.